The following is a 189-amino-acid chain: Ion-translocating oxidoreductase complex subunit B (189 aa).

Positions 1 to 26 (MSAVMIAVVLLGLLALVFGAILGFAA) are hydrophobic. The 4Fe-4S domain occupies 32 to 90 (EGDPLVDQVESLLPQTQCGQCGYPGCRPYAEAIAGGDQINKCPPGGTATMEKIAELMGV). Cysteine 49, cysteine 52, cysteine 57, cysteine 73, cysteine 114, cysteine 117, cysteine 120, cysteine 124, cysteine 144, cysteine 147, cysteine 150, and cysteine 154 together coordinate [4Fe-4S] cluster. 4Fe-4S ferredoxin-type domains follow at residues 105–134 (KVAYIREDECIGCTKCIQACPVDAIVGAGK) and 136–164 (MHTVITQDCTGCDLCVEPCPVDCIDMLPV).

It belongs to the 4Fe4S bacterial-type ferredoxin family. RnfB subfamily. The complex is composed of six subunits: RnfA, RnfB, RnfC, RnfD, RnfE and RnfG. [4Fe-4S] cluster is required as a cofactor.

It is found in the cell inner membrane. Functionally, part of a membrane-bound complex that couples electron transfer with translocation of ions across the membrane. This is Ion-translocating oxidoreductase complex subunit B from Shewanella amazonensis (strain ATCC BAA-1098 / SB2B).